Here is a 2269-residue protein sequence, read N- to C-terminus: Anaphase-promoting complex subunit 1 (2269 aa).

Disordered regions lie at residues 305-334 (PSSNAENDNTNNNNNNNNTNTNISNNQTIN), 379-433 (SSPP…QENS), 609-644 (NNNNNNNNNNNNNNNNNNNNNNNNNNNNNNNKRKPL), 804-845 (KVYP…NNNN), and 1136-1197 (STAS…NSTS). Composition is skewed to low complexity over residues 306 to 334 (SSNAENDNTNNNNNNNNTNTNISNNQTIN), 379 to 430 (SSPP…QQQQ), 609 to 638 (NNNNNNNNNNNNNNNNNNNNNNNNNNNNNN), 809 to 845 (NNNNNNNNNNNNNNNNNNNNNNNNNNNNNNNNNNNNN), and 1136 to 1159 (STASSSSNEMNSNSNITSINGQSN). Residues 1160 to 1177 (GLPMNSTTNQMNSHQINN) show a composition bias toward polar residues. PC repeat units lie at residues 1440–1472 (AALMGIGLLYCQTSNRRMTEVLLMEIGRKPIND) and 1483–1520 (TAGMALGLVNLGKGANEGSLTDLHVEDRLRSFIGISKE). Residues 1535–1586 (STPSISSNRNNNDLFNNGSNNNSSSNGGGGGGGGNNNGNNSNNGNNGSSQFK) form a disordered region. Over residues 1540–1559 (SSNRNNNDLFNNGSNNNSSS) the composition is skewed to low complexity. A compositionally biased stretch (gly residues) spans 1560–1570 (NGGGGGGGGNN). The segment covering 1571 to 1583 (NGNNSNNGNNGSS) has biased composition (low complexity). PC repeat units follow at residues 1605–1637 (GAIIALSLIYLKTNNLKISNYLSIPDTTFGLNY), 1722–1756 (GAAFSIGLKYAGSLNENAFSLLMDLIQLFRKRQVY), and 1792–1807 (LVMAGSGNLETLKILR). Over residues 1960 to 1993 (NNNNNNNNNNNNNNNNNNNNNNNNNNNNNNNNNN) the composition is skewed to low complexity. A disordered region spans residues 1960 to 1997 (NNNNNNNNNNNNNNNNNNNNNNNNNNNNNNNNNNKNIL).

The protein belongs to the APC1 family. In terms of assembly, the APC/C is composed of at least 13 subunits that stay tightly associated throughout the cell cycle: anapc1, anapc2, anapc3, anapc4, anapc5, anapc6, anapc7, anapc8, anapc10, anapc11, cdc20, cdc26 and cdh1.

The protein resides in the nucleus. It functions in the pathway protein modification; protein ubiquitination. Its function is as follows. Component of the anaphase promoting complex/cyclosome (APC/C), a cell cycle-regulated E3 ubiquitin-protein ligase complex that controls progression through mitosis and the G1 phase of the cell cycle. The polypeptide is Anaphase-promoting complex subunit 1 (anapc1) (Dictyostelium discoideum (Social amoeba)).